Here is a 134-residue protein sequence, read N- to C-terminus: Replication enhancer protein (134 aa).

The protein belongs to the geminiviridae replication enhancer protein family. In terms of assembly, homooligomer. Interacts with the replication-associated protein (REP). Interacts with host proliferating cell nuclear antigen (PCNA). Interacts with host retinoblastoma-related protein 1 (RBR1), and may thereby deregulate the host cell cycle. Oligomerization and interaction with PCNA are necessary for optimal replication enhancement.

Its function is as follows. Increases viral DNA accumulation. Enhances infectivity and symptom expression. The sequence is that of Replication enhancer protein from Manihot esculenta (Cassava).